Here is a 641-residue protein sequence, read N- to C-terminus: Threonine--tRNA ligase (641 aa).

One can recognise a TGS domain in the interval 1–61 (MPAITLPDGS…DDDVQLEIVT (61 aa)). Positions 242–533 (DHRRIGRAQN…LIEHYAGALP (292 aa)) are catalytic. Positions 333, 384, and 510 each coordinate Zn(2+).

The protein belongs to the class-II aminoacyl-tRNA synthetase family. As to quaternary structure, homodimer. It depends on Zn(2+) as a cofactor.

It localises to the cytoplasm. It catalyses the reaction tRNA(Thr) + L-threonine + ATP = L-threonyl-tRNA(Thr) + AMP + diphosphate + H(+). Its function is as follows. Catalyzes the attachment of threonine to tRNA(Thr) in a two-step reaction: L-threonine is first activated by ATP to form Thr-AMP and then transferred to the acceptor end of tRNA(Thr). Also edits incorrectly charged L-seryl-tRNA(Thr). The sequence is that of Threonine--tRNA ligase from Alkalilimnicola ehrlichii (strain ATCC BAA-1101 / DSM 17681 / MLHE-1).